The following is a 310-amino-acid chain: Collagen-like protein V6 (310 aa).

Positions 1–41 (MSLSTLFSPNTYNINSKSQTLNNLPSNPTSQTNTLWSNNAY) are enriched in polar residues. Positions 1–183 (MSLSTLFSPN…GDPGAKGDPG (183 aa)) are disordered. Collagen-like domains follow at residues 61–119 (GQKG…KGQA) and 123–182 (GLKG…KGDP). A compositionally biased stretch (basic and acidic residues) spans 92-101 (SGDKGDKGDS). 2 N-linked (GlcNAc...) asparagine; by host glycosylation sites follow: Asn-227 and Asn-264.

This sequence belongs to the sputnik virus V6 family.

This is Collagen-like protein V6 from Sputnik virophage.